Consider the following 971-residue polypeptide: Exportin-2 (971 aa).

The residue at position 1 (Met-1) is an N-acetylmethionine. The 74-residue stretch at 29–102 (AEKFLESVEG…KANIVHLMLS (74 aa)) folds into the Importin N-terminal domain. Ser-112 is modified (phosphoserine). Lys-574 and Lys-824 each carry N6-acetyllysine. Residue Ser-931 is modified to Phosphoserine.

This sequence belongs to the XPO2/CSE1 family. As to quaternary structure, found in a complex with CSE1L/XPO2, Ran and KPNA2. Binds with high affinity to importin-alpha only in the presence of RanGTP. The complex is dissociated by the combined action of RanBP1 and RanGAP1. Interacts with CFTR. As to expression, detected in brain, placenta, ovary, testis and trachea (at protein level). Widely expressed. Highly expressed in testis and in proliferating cells.

It localises to the cytoplasm. The protein resides in the nucleus. Functionally, export receptor for importin-alpha. Mediates importin-alpha re-export from the nucleus to the cytoplasm after import substrates (cargos) have been released into the nucleoplasm. In the nucleus binds cooperatively to importin-alpha and to the GTPase Ran in its active GTP-bound form. Docking of this trimeric complex to the nuclear pore complex (NPC) is mediated through binding to nucleoporins. Upon transit of a nuclear export complex into the cytoplasm, disassembling of the complex and hydrolysis of Ran-GTP to Ran-GDP (induced by RANBP1 and RANGAP1, respectively) cause release of the importin-alpha from the export receptor. CSE1L/XPO2 then return to the nuclear compartment and mediate another round of transport. The directionality of nuclear export is thought to be conferred by an asymmetric distribution of the GTP- and GDP-bound forms of Ran between the cytoplasm and nucleus. This chain is Exportin-2 (CSE1L), found in Homo sapiens (Human).